A 380-amino-acid polypeptide reads, in one-letter code: Outer membrane protein 40 (380 aa).

An N-terminal signal peptide occupies residues 1-21 (MKAKSLLLALAGLACTFSATA). Position 22 is a pyrrolidone carboxylic acid (Gln22). The OmpA-like domain maps to 270 to 380 (PTVTRVVVDN…NRIVVMTAAE (111 aa)).

It belongs to the outer membrane OOP (TC 1.B.6) superfamily. Disulfide-linked heterodimer with Omp41.

It is found in the cell outer membrane. May have porin activity and function in peptidoglycan binding. This is Outer membrane protein 40 from Porphyromonas gingivalis (strain ATCC BAA-308 / W83).